Here is a 183-residue protein sequence, read N- to C-terminus: Capsid protein (183 aa).

The interval 143-183 (LPENAVVRRRGRSPRRRTPSPRRRRSQSPRRRRSQSRGSQC) is disordered. Positions 149–177 (VRRRGRSPRRRTPSPRRRRSQSPRRRRSQ) are enriched in basic residues. A phosphoserine; by host mark is found at S155, S162, and S170. The 1; half-length repeat unit spans residues 155 to 161 (SPRRRTP). Residues 155–177 (SPRRRTPSPRRRRSQSPRRRRSQ) are 3 X 8 AA repeats of S-P-R-R-R-[PR]-S-Q. The Bipartite nuclear localization signal signature appears at 158-175 (RRTPSPRRRRSQSPRRRR). Tandem repeats lie at residues 162–169 (SPRRRRSQ) and 170–177 (SPRRRRSQ). The segment at 177–183 (QSRGSQC) is RNA binding.

The protein belongs to the orthohepadnavirus core antigen family. As to quaternary structure, homodimerizes, then multimerizes. Interacts with cytosol exposed regions of viral L glycoprotein present in the reticulum-to-Golgi compartment. Interacts with human FLNB. Phosphorylated form interacts with host importin alpha; this interaction depends on the exposure of the NLS, which itself depends upon genome maturation and/or phosphorylation of the capsid protein. Interacts with host NUP153. Post-translationally, phosphorylated by host SRPK1, SRPK2, and maybe protein kinase C or GAPDH. Phosphorylation is critical for pregenomic RNA packaging. Protein kinase C phosphorylation is stimulated by HBx protein and may play a role in transport of the viral genome to the nucleus at the late step during the viral replication cycle.

The protein localises to the virion. Its subcellular location is the host cytoplasm. Its function is as follows. Self assembles to form an icosahedral capsid. Most capsids appear to be large particles with an icosahedral symmetry of T=4 and consist of 240 copies of capsid protein, though a fraction forms smaller T=3 particles consisting of 180 capsid proteins. Entering capsids are transported along microtubules to the nucleus. Phosphorylation of the capsid is thought to induce exposure of nuclear localization signal in the C-terminal portion of the capsid protein that allows binding to the nuclear pore complex via the importin (karyopherin-) alpha and beta. Capsids are imported in intact form through the nuclear pore into the nuclear basket, where it probably binds NUP153. Only capsids that contain the mature viral genome can release the viral DNA and capsid protein into the nucleoplasm. Immature capsids get stuck in the basket. Capsids encapsulate the pre-genomic RNA and the P protein. Pre-genomic RNA is reverse-transcribed into DNA while the capsid is still in the cytoplasm. The capsid can then either be directed to the nucleus, providing more genomes for transcription, or bud through the endoplasmic reticulum to provide new virions. This chain is Capsid protein, found in Homo sapiens (Human).